The chain runs to 95 residues: Small ribosomal subunit protein bS16 (95 aa).

This sequence belongs to the bacterial ribosomal protein bS16 family.

The protein is Small ribosomal subunit protein bS16 of Thermotoga neapolitana (strain ATCC 49049 / DSM 4359 / NBRC 107923 / NS-E).